Consider the following 102-residue polypeptide: Large ribosomal subunit protein bL21 (102 aa).

This sequence belongs to the bacterial ribosomal protein bL21 family. In terms of assembly, part of the 50S ribosomal subunit. Contacts protein L20.

Functionally, this protein binds to 23S rRNA in the presence of protein L20. The protein is Large ribosomal subunit protein bL21 of Trichlorobacter lovleyi (strain ATCC BAA-1151 / DSM 17278 / SZ) (Geobacter lovleyi).